Consider the following 73-residue polypeptide: Large ribosomal subunit protein eL20 (73 aa).

This sequence belongs to the eukaryotic ribosomal protein eL20 family. In terms of assembly, part of the 50S ribosomal subunit. Binds 23S rRNA.

This chain is Large ribosomal subunit protein eL20, found in Methanococcus aeolicus (strain ATCC BAA-1280 / DSM 17508 / OCM 812 / Nankai-3).